The primary structure comprises 184 residues: ADP-ribosylation factor-like protein 2 (184 aa).

Residue G2 is the site of N-myristoyl glycine attachment. 23 to 30 (GLDNAGKT) is a binding site for GTP. S45 is subject to Phosphoserine. GTP-binding positions include 66–70 (DVGGQ) and G68. A Glycyl lysine isopeptide (Lys-Gly) (interchain with G-Cter in ubiquitin) cross-link involves residue K71. 125 to 128 (NKQD) provides a ligand contact to GTP.

Belongs to the small GTPase superfamily. Arf family. As to quaternary structure, found in a complex with ARL2, ARL2BP and SLC25A6. Found in a complex with at least ARL2, PPP2CB, PPP2R1A, PPP2R2A, PPP2R5E and TBCD. Interacts with ELMOD2. The GTP-bound form interacts with ARL2BP. The GDP-bound form interacts preferentially with TBCD. Interacts with UNC119. Found in a complex with ARL2, ARL2BP and SLC25A4. The GTP-bound form interacts with PDE6D. Post-translationally, not N-myristoylated. Expressed in brain, retina, lung, cerebellum, liver, kidney, hippocampus, spleen, cortex and heart (at protein level).

Its subcellular location is the mitochondrion intermembrane space. The protein resides in the cytoplasm. It is found in the cytoskeleton. It localises to the microtubule organizing center. The protein localises to the centrosome. Its subcellular location is the nucleus. Its function is as follows. Small GTP-binding protein which cycles between an inactive GDP-bound and an active GTP-bound form, and the rate of cycling is regulated by guanine nucleotide exchange factors (GEF) and GTPase-activating proteins (GAP). GTP-binding protein that does not act as an allosteric activator of the cholera toxin catalytic subunit. Regulates formation of new microtubules and centrosome integrity. Prevents the TBCD-induced microtubule destruction. Participates in association with TBCD, in the disassembly of the apical junction complexes. Antagonizes the effect of TBCD on epithelial cell detachment and tight and adherens junctions disassembly. Together with ARL2, plays a role in the nuclear translocation, retention and transcriptional activity of STAT3. Component of a regulated secretory pathway involved in Ca(2+)-dependent release of acetylcholine. Required for normal progress through the cell cycle. The sequence is that of ADP-ribosylation factor-like protein 2 (Arl2) from Rattus norvegicus (Rat).